Here is a 599-residue protein sequence, read N- to C-terminus: Putative sensor histidine kinase NtrY-like (599 aa).

The next 4 membrane-spanning stretches (helical) occupy residues 17-37 (VLIF…FYVI), 44-64 (FSTI…LGVL), 85-105 (IVIA…VFSV), and 285-305 (IMFI…GVIF). Residues 307–361 (AKIVKPIKKLVTATDKVKDGDLTVQVPENEVDKDEIGTLYAAFNRMIKQLSRQQR) form the HAMP domain. The Histidine kinase domain maps to 378-589 (KVAHEIKNPL…IIDIKFDLKK (212 aa)). H381 carries the phosphohistidine; by autocatalysis modification.

The protein localises to the cell membrane. The catalysed reaction is ATP + protein L-histidine = ADP + protein N-phospho-L-histidine.. In terms of biological role, member of the two-component regulatory system RF_0427/RF_0895. In Rickettsia felis (strain ATCC VR-1525 / URRWXCal2) (Rickettsia azadi), this protein is Putative sensor histidine kinase NtrY-like.